Here is a 98-residue protein sequence, read N- to C-terminus: Large ribosomal subunit protein bL28 (98 aa).

Part of the 50S ribosomal subunit.

The polypeptide is Large ribosomal subunit protein bL28 (rpmB) (Thermus thermophilus (strain ATCC 27634 / DSM 579 / HB8)).